The chain runs to 758 residues: Amyloid beta precursor protein binding family B member 2 (758 aa).

At S123 the chain carries Phosphoserine. The disordered stretch occupies residues 134–154; that stretch reads KLEGKEPHPQDSSSCEILPSQ. Phosphoserine is present on S160. Over residues 176–190 the composition is skewed to basic and acidic residues; sequence EQNRGNHHGTAEEKS. Disordered stretches follow at residues 176 to 195, 206 to 295, and 326 to 351; these read EQNR…PVQG, LLLQ…LPPG, and DLQG…KQPW. Composition is skewed to polar residues over residues 212–230 and 261–275; these read NRPQ…SSSP and SWTT…PSSP. The 33-residue stretch at 290-322 folds into the WW domain; the sequence is PDLPPGWKRVSDIAGTYYWHIPTGTTQWERPVS. Residues 331–340 show a composition bias toward polar residues; that stretch reads RKGSLSSVTP. A phosphoserine mark is found at S334, S409, and S412. 2 consecutive PID domains span residues 413–578 and 584–736; these read DPEA…LQVD and TELV…VTTN.

As to quaternary structure, interacts (via C-terminus) with APP (via C-terminus). Interacts with APLP2 (via cytoplasmic domain). As to expression, widely expressed.

It is found in the endoplasmic reticulum. The protein localises to the golgi apparatus. It localises to the early endosome. Its function is as follows. Plays a role in the maintenance of lens transparency, and may also play a role in muscle cell strength. Involved in hippocampal neurite branching and neuromuscular junction formation, as a result plays a role in spatial memory functioning. Activates transcription of APP. The chain is Amyloid beta precursor protein binding family B member 2 from Homo sapiens (Human).